Here is an 84-residue protein sequence, read N- to C-terminus: Large ribosomal subunit protein bL27 (84 aa).

Positions Met1–Leu21 are disordered.

Belongs to the bacterial ribosomal protein bL27 family.

In Dehalococcoides mccartyi (strain ATCC BAA-2100 / JCM 16839 / KCTC 5957 / BAV1), this protein is Large ribosomal subunit protein bL27.